The following is a 283-amino-acid chain: Aldo-keto reductase MSMEG_2407/MSMEI_2346 (283 aa).

Y58 (proton donor) is an active-site residue. Positions 196, 198, 200, 236, 238, 239, 240, 244, 247, 248, and 274 each coordinate NADPH.

This sequence belongs to the aldo/keto reductase family. In terms of assembly, monomer.

Inhibited by the antituberculosis drug isoniazid (INH). Functionally, catalyzes the NADPH-dependent reduction of dicarbonyls. Exhibits narrow substrate specificity, with preferential activity against the dicarbonyl substrates phenylglyoxal and methylglyoxal. Exhibits weak activity with ethyl-2-methyl acetoacetate. Cannot use NADH. May play an important role in the detoxification of methylglyoxal. The sequence is that of Aldo-keto reductase MSMEG_2407/MSMEI_2346 from Mycolicibacterium smegmatis (strain ATCC 700084 / mc(2)155) (Mycobacterium smegmatis).